Reading from the N-terminus, the 353-residue chain is Photosystem II protein D1 (353 aa).

Thr-2 is modified (N-acetylthreonine). A Phosphothreonine modification is found at Thr-2. Helical transmembrane passes span 29–46 (YIGW…TATS), 118–133 (HFLL…EWEL), and 142–156 (WIAV…AATA). Residue His-118 coordinates chlorophyll a. Tyr-126 contacts pheophytin a. 2 residues coordinate [CaMn4O5] cluster: Asp-170 and Glu-189. The chain crosses the membrane as a helical span at residues 197–218 (FHMLGVAGVFGGSLFSAMHGSL). His-198 lines the chlorophyll a pocket. Residues His-215 and 264-265 (SF) contribute to the a quinone site. Residue His-215 coordinates Fe cation. Residue His-272 participates in Fe cation binding. Residues 274-288 (FLAAWPVIGIWFTAL) form a helical membrane-spanning segment. The [CaMn4O5] cluster site is built by His-332, Glu-333, Asp-342, and Ala-344. A propeptide spanning residues 345 to 353 (AVEAPSTNG) is cleaved from the precursor.

Belongs to the reaction center PufL/M/PsbA/D family. PSII is composed of 1 copy each of membrane proteins PsbA, PsbB, PsbC, PsbD, PsbE, PsbF, PsbH, PsbI, PsbJ, PsbK, PsbL, PsbM, PsbT, PsbX, PsbY, PsbZ, Psb30/Ycf12, at least 3 peripheral proteins of the oxygen-evolving complex and a large number of cofactors. It forms dimeric complexes. It depends on The D1/D2 heterodimer binds P680, chlorophylls that are the primary electron donor of PSII, and subsequent electron acceptors. It shares a non-heme iron and each subunit binds pheophytin, quinone, additional chlorophylls, carotenoids and lipids. D1 provides most of the ligands for the Mn4-Ca-O5 cluster of the oxygen-evolving complex (OEC). There is also a Cl(-1) ion associated with D1 and D2, which is required for oxygen evolution. The PSII complex binds additional chlorophylls, carotenoids and specific lipids. as a cofactor. In terms of processing, tyr-161 forms a radical intermediate that is referred to as redox-active TyrZ, YZ or Y-Z. Post-translationally, C-terminally processed by CTPA; processing is essential to allow assembly of the oxygen-evolving complex and thus photosynthetic growth.

It is found in the plastid. It localises to the chloroplast thylakoid membrane. It carries out the reaction 2 a plastoquinone + 4 hnu + 2 H2O = 2 a plastoquinol + O2. Its function is as follows. Photosystem II (PSII) is a light-driven water:plastoquinone oxidoreductase that uses light energy to abstract electrons from H(2)O, generating O(2) and a proton gradient subsequently used for ATP formation. It consists of a core antenna complex that captures photons, and an electron transfer chain that converts photonic excitation into a charge separation. The D1/D2 (PsbA/PsbD) reaction center heterodimer binds P680, the primary electron donor of PSII as well as several subsequent electron acceptors. This is Photosystem II protein D1 from Buxus microphylla (Littleleaf boxwood).